The chain runs to 631 residues: Mercuric reductase (631 aa).

2 HMA domains span residues 2–66 (KKYR…YHPG) and 81–145 (KKYR…YQPG). Residues Cys13, Cys16, Cys92, and Cys95 each coordinate a metal cation. FAD is bound by residues Ala181, Gly201, and Thr206. Residues Cys207 and Cys212 are joined by a disulfide bond. Residues Lys216, Asp472, and Val480 each contribute to the FAD site. Hg(2+) contacts are provided by Cys628 and Cys629.

This sequence belongs to the class-I pyridine nucleotide-disulfide oxidoreductase family. Homodimer. FAD is required as a cofactor.

The enzyme catalyses Hg + NADP(+) + H(+) = Hg(2+) + NADPH. Resistance to Hg(2+) in bacteria appears to be governed by a specialized system which includes mercuric reductase. MerA protein is responsible for volatilizing mercury as Hg(0). The polypeptide is Mercuric reductase (merA) (Bacillus cereus).